Reading from the N-terminus, the 66-residue chain is Photosystem II reaction center protein J (66 aa).

Residues 37–57 form a helical membrane-spanning segment; the sequence is LWLVATAGGMAVIFVVGLFFY.

The protein belongs to the PsbJ family. In terms of assembly, PSII is composed of 1 copy each of membrane proteins PsbA, PsbB, PsbC, PsbD, PsbE, PsbF, PsbH, PsbI, PsbJ, PsbK, PsbL, PsbM, PsbT, PsbX, PsbY, PsbZ, Psb30/Ycf12, peripheral proteins PsbO, CyanoQ (PsbQ), PsbU, PsbV and a large number of cofactors. It forms dimeric complexes.

It localises to the cellular thylakoid membrane. Functionally, one of the components of the core complex of photosystem II (PSII). PSII is a light-driven water:plastoquinone oxidoreductase that uses light energy to abstract electrons from H(2)O, generating O(2) and a proton gradient subsequently used for ATP formation. It consists of a core antenna complex that captures photons, and an electron transfer chain that converts photonic excitation into a charge separation. This chain is Photosystem II reaction center protein J, found in Synechococcus sp. (strain CC9311).